A 492-amino-acid chain; its full sequence is ATP synthase subunit beta, chloroplastic (492 aa).

170–177 contributes to the ATP binding site; it reads GGAGVGKT.

The protein belongs to the ATPase alpha/beta chains family. F-type ATPases have 2 components, CF(1) - the catalytic core - and CF(0) - the membrane proton channel. CF(1) has five subunits: alpha(3), beta(3), gamma(1), delta(1), epsilon(1). CF(0) has four main subunits: a(1), b(1), b'(1) and c(9-12).

The protein resides in the plastid. It localises to the chloroplast thylakoid membrane. The catalysed reaction is ATP + H2O + 4 H(+)(in) = ADP + phosphate + 5 H(+)(out). Functionally, produces ATP from ADP in the presence of a proton gradient across the membrane. The catalytic sites are hosted primarily by the beta subunits. This chain is ATP synthase subunit beta, chloroplastic, found in Pinus thunbergii (Japanese black pine).